A 158-amino-acid polypeptide reads, in one-letter code: Large ribosomal subunit protein uL30 (158 aa).

The protein belongs to the universal ribosomal protein uL30 family. As to quaternary structure, part of the 50S ribosomal subunit.

This chain is Large ribosomal subunit protein uL30, found in Saccharolobus islandicus (strain Y.N.15.51 / Yellowstone #2) (Sulfolobus islandicus).